The primary structure comprises 769 residues: MQKPGQNIDFALKETSPKIGAGSVTGDKLCSTYDLVEQMHYLYVRVVKAKELPGKDVTGSCDPYVEVKLGNYRGMTKHFEKRSNPEWKQVFAFSKERIQASILEVVVKDKDVVLDDLIGRIMFDLNEIPKRVPPDSPLAPQWYRLEDRHGRKVKGELMLAVWMGTQADEAFSDAWHSDAATVGPEGVTHIRSKVYLSPKLWYVRVNVIEAQDLIPHDKTKFPEVYVKAMLGNQTLRTRISQTKTLNPMWNEDLMFVVAEPFEEALILAVEDRVAPNKDETLGRCAIPLQNVQRRLDHRPLNSRWFNLEKHIMVEGEQKEIKFASRIHLRIFLEGGYHVLDESTHYSSDLRPTAKQLWKPSIGLLEVGIISAHGLMPMKSKDGKGTTDAYCVAKYGQKWIRTRTIVDSFTPKWNEQYTWEVFDTCTVITFGAFDNGHIPGGSGKDLRIGKVRIRLSTLEADRIYTHSYPLLVFHPSGIKKTGEIQLAVRFTCLSLINMLHMYSQPLLPKMHYIHPLSVLQLDSLRHQAMNIVSARLNRAEPPLRKEIVEYMLDVDSHMWSMRRSKANFFRIMNVLSGLIAVGKWFDQICNWRNPITTILIHVLFIILVLYPELILPTVFLYLFLIGIWNFRWRPRHPPHMDTRLSHADAVHPDELDEEFDTFPTSRSSEIVRMRYDRLRSIGGRVQTVIGDLATQGERFLSLLSWRDPRATTLFVLFCLIAAIVLYVTPFQVVALLAGIYVLRHPRFRHKLPSVPLNLFRRLPARSDSLL.

3 C2 domains span residues 23–143 (SVTG…PQWY), 184–305 (PEGV…SRWF), and 345–467 (YSSD…THSY). Residues Asp56, Asp62, Asp109, Asp111, and Asp116 each contribute to the Ca(2+) site. The next 2 helical transmembrane spans lie at 604-624 (IILV…LFLI) and 712-732 (LFVL…FQVV).

It belongs to the MCTP family. Ca(2+) serves as cofactor. As to expression, highly expressed in roots meristems and shoot apical meristems (SAMs). Observed in flowers.

Its subcellular location is the endoplasmic reticulum membrane. Functionally, may function as a signaling molecule by regulating the trafficking of other regulators. The polypeptide is Multiple C2 domain and transmembrane region protein 5 (Arabidopsis thaliana (Mouse-ear cress)).